We begin with the raw amino-acid sequence, 470 residues long: Putative multidrug resistance protein MdtD (470 aa).

The Periplasmic segment spans residues 1 to 11 (MTELPDNTRWQ). A helical membrane pass occupies residues 12–32 (LWIVAFGFFMQSLDTTIVNTA). Topologically, residues 33–48 (LPSMAKSLGESPLHMH) are cytoplasmic. Residues 49 to 69 (MVVVSYVLTVAVMLPASGWLA) traverse the membrane as a helical segment. Topologically, residues 70 to 76 (DKIGVRN) are periplasmic. A helical membrane pass occupies residues 77–97 (IFFAAIVLFTLGSLFCALSGT). The Cytoplasmic portion of the chain corresponds to 98 to 101 (LNQL). A helical membrane pass occupies residues 102–124 (VLARVLQGVGGAMMVPVGRLTVM). Over 125–137 (KIVPRAQYMAAMT) the chain is Periplasmic. Residues 138 to 158 (FVTLPGQIGPLLGPALGGVLV) traverse the membrane as a helical segment. Residues 159 to 164 (EYASWH) are Cytoplasmic-facing. Residues 165-185 (WIFLINIPVGIVGAMATFMLM) traverse the membrane as a helical segment. Topologically, residues 186 to 196 (PNYIIETRRFD) are periplasmic. A helical transmembrane segment spans residues 197 to 217 (LPGFLLLAIGMAVLTLALDGS). The Cytoplasmic portion of the chain corresponds to 218-224 (KSMGISP). Residues 225–245 (WTLAGLAAGGAAAILLYLFHA) traverse the membrane as a helical segment. Residues 246 to 262 (KKNSGALFSLRLFRTPT) lie on the Periplasmic side of the membrane. A helical membrane pass occupies residues 263-283 (FSLGLLGSFAGRIGSGMLPFM). Residues 284 to 285 (TP) are Cytoplasmic-facing. A helical transmembrane segment spans residues 286–306 (VFLQIGLGFSPFHAGLMMIPM). Residues 307-341 (VLGSMGMKRIVVQIVNRFGYRRVLVATTLGLALVS) lie on the Periplasmic side of the membrane. A helical transmembrane segment spans residues 342-362 (LLFMSVALLGWYYLLPLVLLL). Topologically, residues 363–395 (QGMVNSARFSSMNTLTLKDLPDTLASSGNSLLS) are cytoplasmic. The helical transmembrane segment at 396–416 (MIMQLSMSIGVTIAGMLLGMF) threads the bilayer. The Periplasmic portion of the chain corresponds to 417–430 (GQQHIGIDSSATHH). The helical transmembrane segment at 431-451 (VFMYTWLCMAVIIALPAIIFA) threads the bilayer. At 452-470 (RVPNDTQQNMVISRRKRSL) the chain is on the cytoplasmic side.

It belongs to the major facilitator superfamily. TCR/Tet family.

Its subcellular location is the cell inner membrane. The chain is Putative multidrug resistance protein MdtD from Salmonella typhimurium (strain LT2 / SGSC1412 / ATCC 700720).